Here is a 111-residue protein sequence, read N- to C-terminus: Iron-sulfur cluster insertion protein ErpA (111 aa).

Positions 39, 103, and 105 each coordinate iron-sulfur cluster.

This sequence belongs to the HesB/IscA family. In terms of assembly, homodimer. It depends on iron-sulfur cluster as a cofactor.

In terms of biological role, required for insertion of 4Fe-4S clusters for at least IspG. This chain is Iron-sulfur cluster insertion protein ErpA, found in Buchnera aphidicola subsp. Cinara cedri (strain Cc).